A 427-amino-acid polypeptide reads, in one-letter code: Serine/threonine-protein kinase ssn3 (427 aa).

Positions 40–369 (YHIVGFISSG…AQEALEHPYF (330 aa)) constitute a Protein kinase domain. ATP contacts are provided by residues 46-54 (ISSGTYGRV) and lysine 70. Aspartate 172 acts as the Proton acceptor in catalysis. Residues 390–399 (RRVTQDDNDI) show a composition bias toward basic and acidic residues. The segment at 390–427 (RRVTQDDNDIRSGSLPGTKRSGLPDDSLLGRATKRLKE) is disordered.

The protein belongs to the protein kinase superfamily. CMGC Ser/Thr protein kinase family. CDC2/CDKX subfamily. Component of the srb8-11 complex, a regulatory module of the Mediator complex. Requires Mg(2+) as cofactor.

Its subcellular location is the nucleus. It catalyses the reaction L-seryl-[protein] + ATP = O-phospho-L-seryl-[protein] + ADP + H(+). The enzyme catalyses L-threonyl-[protein] + ATP = O-phospho-L-threonyl-[protein] + ADP + H(+). The catalysed reaction is [DNA-directed RNA polymerase] + ATP = phospho-[DNA-directed RNA polymerase] + ADP + H(+). Its function is as follows. Component of the srb8-11 complex. The srb8-11 complex is a regulatory module of the Mediator complex which is itself involved in regulation of basal and activated RNA polymerase II-dependent transcription. The srb8-11 complex may be involved in the transcriptional repression of a subset of genes regulated by Mediator. It may inhibit the association of the Mediator complex with RNA polymerase II to form the holoenzyme complex. The srb8-11 complex phosphorylates the C-terminal domain (CTD) of the largest subunit of RNA polymerase II. The protein is Serine/threonine-protein kinase ssn3 (ssn3) of Aspergillus niger (strain ATCC MYA-4892 / CBS 513.88 / FGSC A1513).